Consider the following 122-residue polypeptide: Small ribosomal subunit protein uS13 (122 aa).

The interval 99–122 (RGQRTHTNARTRKGPAKAIAGKKK) is disordered.

Belongs to the universal ribosomal protein uS13 family. Part of the 30S ribosomal subunit. Forms a loose heterodimer with protein S19. Forms two bridges to the 50S subunit in the 70S ribosome.

Functionally, located at the top of the head of the 30S subunit, it contacts several helices of the 16S rRNA. In the 70S ribosome it contacts the 23S rRNA (bridge B1a) and protein L5 of the 50S subunit (bridge B1b), connecting the 2 subunits; these bridges are implicated in subunit movement. Contacts the tRNAs in the A and P-sites. The polypeptide is Small ribosomal subunit protein uS13 (Rhodopseudomonas palustris (strain BisB5)).